A 316-amino-acid chain; its full sequence is Acetaldehyde dehydrogenase (316 aa).

11–14 (SGNI) is a binding site for NAD(+). Cysteine 131 acts as the Acyl-thioester intermediate in catalysis. NAD(+) contacts are provided by residues 162 to 170 (SAGPGTRAN) and asparagine 289.

This sequence belongs to the acetaldehyde dehydrogenase family. As to quaternary structure, interacts with MhpE.

It catalyses the reaction acetaldehyde + NAD(+) + CoA = acetyl-CoA + NADH + H(+). Its pathway is aromatic compound metabolism; 3-phenylpropanoate degradation. In terms of biological role, catalyzes the conversion of acetaldehyde to acetyl-CoA, using NAD(+) and coenzyme A. Is the final enzyme in the meta-cleavage pathway for the degradation of aromatic compounds. This is Acetaldehyde dehydrogenase from Escherichia coli O7:K1 (strain IAI39 / ExPEC).